The sequence spans 226 residues: Flagellar L-ring protein (226 aa).

Residues 1–15 form the signal peptide; the sequence is MKRLAVSILCLALAG. Cysteine 16 carries N-palmitoyl cysteine lipidation. Cysteine 16 is lipidated: S-diacylglycerol cysteine.

This sequence belongs to the FlgH family. The basal body constitutes a major portion of the flagellar organelle and consists of four rings (L,P,S, and M) mounted on a central rod.

The protein localises to the cell outer membrane. It localises to the bacterial flagellum basal body. Its function is as follows. Assembles around the rod to form the L-ring and probably protects the motor/basal body from shearing forces during rotation. This is Flagellar L-ring protein from Geobacter metallireducens (strain ATCC 53774 / DSM 7210 / GS-15).